The chain runs to 741 residues: 1,4-alpha-glucan branching enzyme GlgB 2 (741 aa).

The interval 1–38 (MALRDTSIPEPSGPVPPAPGACATAPPLDPTDRGRLLA) is disordered. Residue aspartate 421 is the Nucleophile of the active site. The Proton donor role is filled by glutamate 474.

This sequence belongs to the glycosyl hydrolase 13 family. GlgB subfamily. In terms of assembly, monomer.

It carries out the reaction Transfers a segment of a (1-&gt;4)-alpha-D-glucan chain to a primary hydroxy group in a similar glucan chain.. Its pathway is glycan biosynthesis; glycogen biosynthesis. Functionally, catalyzes the formation of the alpha-1,6-glucosidic linkages in glycogen by scission of a 1,4-alpha-linked oligosaccharide from growing alpha-1,4-glucan chains and the subsequent attachment of the oligosaccharide to the alpha-1,6 position. The sequence is that of 1,4-alpha-glucan branching enzyme GlgB 2 (glgB2) from Streptomyces coelicolor (strain ATCC BAA-471 / A3(2) / M145).